The chain runs to 266 residues: Undecaprenyl-diphosphatase (266 aa).

A run of 8 helical transmembrane segments spans residues 1–21 (MDTLQVIILALIQGLTEFLPI), 39–59 (QGLSFDVAVHIGSLAAVVIYF), 83–103 (SKLAWWIILATIPAIGVGFTA), 111–131 (LRGPGVIAITTVIFGLLLWFA), 149–169 (ALLIGVAQALALIPGTSRSGI), 183–203 (AAARFSFLMSIPVILGAALLM), 218–238 (ALALGSILSFIAAYACIYFFL), and 246–266 (MTPFVIYRIALGVFLCGFIYL).

It belongs to the UppP family.

The protein resides in the cell inner membrane. It carries out the reaction di-trans,octa-cis-undecaprenyl diphosphate + H2O = di-trans,octa-cis-undecaprenyl phosphate + phosphate + H(+). In terms of biological role, catalyzes the dephosphorylation of undecaprenyl diphosphate (UPP). Confers resistance to bacitracin. This is Undecaprenyl-diphosphatase from Shewanella amazonensis (strain ATCC BAA-1098 / SB2B).